Reading from the N-terminus, the 120-residue chain is Putative pterin-4-alpha-carbinolamine dehydratase (120 aa).

Belongs to the pterin-4-alpha-carbinolamine dehydratase family.

The catalysed reaction is (4aS,6R)-4a-hydroxy-L-erythro-5,6,7,8-tetrahydrobiopterin = (6R)-L-erythro-6,7-dihydrobiopterin + H2O. This is Putative pterin-4-alpha-carbinolamine dehydratase from Bdellovibrio bacteriovorus (strain ATCC 15356 / DSM 50701 / NCIMB 9529 / HD100).